A 325-amino-acid polypeptide reads, in one-letter code: tRNA(Ile)-lysidine synthase (325 aa).

S35 to S40 is an ATP binding site.

Belongs to the tRNA(Ile)-lysidine synthase family.

The protein resides in the cytoplasm. The enzyme catalyses cytidine(34) in tRNA(Ile2) + L-lysine + ATP = lysidine(34) in tRNA(Ile2) + AMP + diphosphate + H(+). In terms of biological role, ligates lysine onto the cytidine present at position 34 of the AUA codon-specific tRNA(Ile) that contains the anticodon CAU, in an ATP-dependent manner. Cytidine is converted to lysidine, thus changing the amino acid specificity of the tRNA from methionine to isoleucine. The sequence is that of tRNA(Ile)-lysidine synthase from Gloeobacter violaceus (strain ATCC 29082 / PCC 7421).